The sequence spans 683 residues: MQQLSLLDSVVIPDTAQLRAAELRRLLEHHNRCYYELDSPEISDAEYDALFRELQVIEAARPDLLTPDSPTLRVGGKPLARFSQVRHRMPMLSLENAMQEDEIRGFEQRIRSLLALPDTVALQYQCEPKMDGLAVELVYQDGLLVQASTRGDGEVGEEVTANIRTVRNVPLRLTGDNLPALLEVRGEVYLPLAAFQQLNQQREEAGEPPFANPRNAAAGSIRQLDPAVVARRPLAMVCYGVGVMETEARTQTELMSQLAAWGLPVSDQARQVSGIEGAIACFQDLQERRDSLLYEIDGMVIKVDDLRLQQELGEKSRSPRWAIACKFPPRQATTRINEIILSVGRTGVITPVASLEPVELSGVTVSRATLHNWDEIRRKDIRVGDRVIVERAGDVIPAVVKVLLDKRSGTEQELPEPETCPVCGSRAAREAGEVAVRCQGGLACPPQLAESIIHFASRDAMDIDGLGSKYIEQLISLGLVKDIADLYRLTRDDFMQFERMGDKLAENLLAAIASSKQQELSRFIFALGIRHVGERTARTLAERFGSIDNLQTATLEELTSIRDVGPAVAISIRSFFDAPANQTVLQRLKAAGVAPTVEEKRVGGRLAGLTFVFTGTLATLGRDEAKKLVEAEGGNVTGSVSKKTDYVVAGSEAGSKLEKARNLGITVLSEDAFSKLLATGGNQ.

NAD(+)-binding positions include 44–48, 93–94, and Glu-127; these read DAEYD and SL. The active-site N6-AMP-lysine intermediate is Lys-129. NAD(+) is bound by residues Arg-150, Glu-187, Lys-302, and Lys-326. 4 residues coordinate Zn(2+): Cys-420, Cys-423, Cys-438, and Cys-444. Residues 601 to 683 enclose the BRCT domain; sequence RVGGRLAGLT…SKLLATGGNQ (83 aa).

Belongs to the NAD-dependent DNA ligase family. LigA subfamily. Mg(2+) serves as cofactor. It depends on Mn(2+) as a cofactor.

It carries out the reaction NAD(+) + (deoxyribonucleotide)n-3'-hydroxyl + 5'-phospho-(deoxyribonucleotide)m = (deoxyribonucleotide)n+m + AMP + beta-nicotinamide D-nucleotide.. Functionally, DNA ligase that catalyzes the formation of phosphodiester linkages between 5'-phosphoryl and 3'-hydroxyl groups in double-stranded DNA using NAD as a coenzyme and as the energy source for the reaction. It is essential for DNA replication and repair of damaged DNA. The protein is DNA ligase of Trichlorobacter lovleyi (strain ATCC BAA-1151 / DSM 17278 / SZ) (Geobacter lovleyi).